A 59-amino-acid polypeptide reads, in one-letter code: Large ribosomal subunit protein uL30 (59 aa).

It belongs to the universal ribosomal protein uL30 family. Part of the 50S ribosomal subunit.

This is Large ribosomal subunit protein uL30 from Edwardsiella ictaluri (strain 93-146).